A 333-amino-acid polypeptide reads, in one-letter code: Geminin coiled-coil domain-containing protein 1 (333 aa).

A coiled-coil region spans residues 83–118 (QLYRNKQLQDTLLQKEEELARLHEENNHLRQYLNST). Positions 145-154 (KEKRKPKEHR) are enriched in basic residues. The tract at residues 145–165 (KEKRKPKEHRHSPAEIPQFKT) is disordered.

The protein belongs to the GEMC1 family. Post-translationally, highly phosphorylated by CDK2; stimulates initiation of DNA replication.

It is found in the nucleus. In terms of biological role, regulator of DNA replication. Promotes initiation of chromosomal DNA replication by mediating TOPBP1- and CDK2-dependent recruitment of CDC45L onto replication origins. In Mus musculus (Mouse), this protein is Geminin coiled-coil domain-containing protein 1 (Gmnc).